Reading from the N-terminus, the 155-residue chain is Ribonuclease H (155 aa).

Residues Met1–Ser142 form the RNase H type-1 domain. The Mg(2+) site is built by Asp10, Glu48, Asp70, and Asp134.

Belongs to the RNase H family. Monomer. It depends on Mg(2+) as a cofactor.

Its subcellular location is the cytoplasm. It carries out the reaction Endonucleolytic cleavage to 5'-phosphomonoester.. Functionally, endonuclease that specifically degrades the RNA of RNA-DNA hybrids. This is Ribonuclease H from Klebsiella pneumoniae (strain 342).